Here is a 196-residue protein sequence, read N- to C-terminus: Imidazole glycerol phosphate synthase subunit HisH (196 aa).

A Glutamine amidotransferase type-1 domain is found at 2-196 (KVAVIKYNAG…ERIIKNFLEL (195 aa)). C77 acts as the Nucleophile in catalysis. Residues H178 and E180 contribute to the active site.

Heterodimer of HisH and HisF.

The protein resides in the cytoplasm. The enzyme catalyses 5-[(5-phospho-1-deoxy-D-ribulos-1-ylimino)methylamino]-1-(5-phospho-beta-D-ribosyl)imidazole-4-carboxamide + L-glutamine = D-erythro-1-(imidazol-4-yl)glycerol 3-phosphate + 5-amino-1-(5-phospho-beta-D-ribosyl)imidazole-4-carboxamide + L-glutamate + H(+). It catalyses the reaction L-glutamine + H2O = L-glutamate + NH4(+). The protein operates within amino-acid biosynthesis; L-histidine biosynthesis; L-histidine from 5-phospho-alpha-D-ribose 1-diphosphate: step 5/9. Functionally, IGPS catalyzes the conversion of PRFAR and glutamine to IGP, AICAR and glutamate. The HisH subunit catalyzes the hydrolysis of glutamine to glutamate and ammonia as part of the synthesis of IGP and AICAR. The resulting ammonia molecule is channeled to the active site of HisF. The polypeptide is Imidazole glycerol phosphate synthase subunit HisH (Bacteroides fragilis (strain ATCC 25285 / DSM 2151 / CCUG 4856 / JCM 11019 / LMG 10263 / NCTC 9343 / Onslow / VPI 2553 / EN-2)).